The sequence spans 664 residues: Acetylcholinesterase (664 aa).

Positions 1-29 (MFVNQRTRRPYMSVFVLVLGAAVICPAYG) are cleaved as a signal peptide. A disulfide bond links Cys95 and Cys122. An N-linked (GlcNAc...) asparagine glycan is attached at Asn117. Ser261 functions as the Acyl-ester intermediate in the catalytic mechanism. Cys315 and Cys330 are oxidised to a cystine. Residue Asn316 is glycosylated (N-linked (GlcNAc...) asparagine). Residues Glu390 and His504 each act as charge relay system in the active site. An intrachain disulfide couples Cys466 to Cys588. N-linked (GlcNAc...) asparagine glycosylation is present at Asn517. Residue Asn647 is the site of GPI-anchor amidated asparagine attachment. The propeptide at 648–664 (KTPPHPQVILETRAFMH) is removed in mature form.

It belongs to the type-B carboxylesterase/lipase family. As to quaternary structure, homodimer; disulfide-linked.

The protein resides in the synapse. The protein localises to the cell membrane. It carries out the reaction acetylcholine + H2O = choline + acetate + H(+). In terms of biological role, rapidly hydrolyzes choline released into the synapse. It can hydrolyze butyrylthiocholine. This Anopheles stephensi (Indo-Pakistan malaria mosquito) protein is Acetylcholinesterase.